The chain runs to 299 residues: MTLSQTAVSRPQIFICTLLSSESLVDLYTQILEGDRYSLVHATYDNFLEIVEQGKHRIDCLIFEKNAALPKVVSHLHREAILLPAVLLQVEESVEKTSQPNSADRDPQQDSYYHIAEVIVDHDQEDILSSIDCAIAQFLQLSKACRLPTRLQKKYADEAIQDNLATQQQRLSQKLKERLGYLGVYYKRNPQQFFHKLTEEEQTDYLVTLKRDYRDIILNYFRQDSSVNQEIDDFVTQIFFADISILKILEIHMELMDAFAKKLKLEGRNEDILLDYRLTLIDIMAHLCEMYRRSIPKTR.

The tract at residues 9-148 (SRPQIFICTL…LQLSKACRLP (140 aa)) is psR domain, binds oxidized quinones. Residues 9-179 (SRPQIFICTL…RLSQKLKERL (171 aa)) enclose the KaiA N-terminal domain. Positions 180–188 (GYLGVYYKR) are flexible linker. A KaiA C-terminal domain is found at 189–297 (NPQQFFHKLT…CEMYRRSIPK (109 aa)).

As to quaternary structure, homodimer. The KaiABC complex composition changes during the circadian cycle to control KaiC phosphorylation. Complexes KaiC(6), KaiA(2-4):KaiC(6), KaiB(6):KaiC(6) and KaiC(6):KaiB(6):KaiA(12) are among the most important forms, many form cooperatively. KaiA and CikA bind to the same region of the KaiB(fs) form and therefore compete.

Its function is as follows. Key component of the KaiABC oscillator complex, which constitutes the main circadian regulator in cyanobacteria. Complex composition changes during the circadian cycle to control KaiC phosphorylation. KaiA stimulates KaiC autophosphorylation, while KaiB sequesters KaiA, leading to KaiC autodephosphorylation. KaiA binding to the KaiC CII domain during the subjective day yields KaiA(2-4):KaiC(6) complexes which stimulate KaiC autophosphorylation. Phospho-Ser-431 KaiC accumulation triggers binding of KaiB during the subjective night to form the KaiB(6):KaiC(6) complex, leading to changes in the output regulators CikA and SasA. KaiB(6):KaiC(6) formation exposes a site for KaiA binding on KaiB that sequesters KaiA from KaiC's CII domain, making the KaiC(6):KaiB(6):KaiA(12) complex resulting in KaiC autodephosphorylation. Complete dephosphorylation of KaiC leads to dissociation of KaiA(2):KaiB(1), completing 1 cycle of the Kai oscillator. Functionally, binds oxidized quinones via the N-terminal PsR domain, allowing it to sense redox changes and possibly mediate clock input. This is Circadian clock oscillator protein KaiA from Acaryochloris marina (strain MBIC 11017).